The sequence spans 78 residues: Myrmicitoxin-Ta2a (78 aa).

The first 26 residues, 1 to 26, serve as a signal peptide directing secretion; that stretch reads MKLSFLSLALAIIFVTVLIYAPQAEA. The propeptide occupies 27–56; sequence KALADAVADADADADAAADAVADALADADA. K77 is modified (lysine amide).

This sequence belongs to the formicidae venom precursor-01 superfamily. As to expression, expressed by the venom gland.

It is found in the secreted. Functionally, peptide with toxicity towards insects that may also act as antimicrobial peptide. Causes calcium influx in F11 cells (EC(50)=5.8 nM), possibly by modulating sodium channels (Nav). In vivo, is lethal to insects, but does not show toxicity to vertebrates. Intraplantar injection into mice does not induce spontaneous nocifensive behaviors up to a dose of 200 pmol. This Tetramorium africanum (Fierce ant) protein is Myrmicitoxin-Ta2a.